The sequence spans 279 residues: NH(3)-dependent NAD(+) synthetase (279 aa).

46 to 53 (GISGGQDS) is a binding site for ATP. D52 lines the Mg(2+) pocket. R145 provides a ligand contact to deamido-NAD(+). T165 is an ATP binding site. E170 contributes to the Mg(2+) binding site. Deamido-NAD(+) contacts are provided by K178 and D185. Positions 194 and 216 each coordinate ATP. 265–266 (HK) contacts deamido-NAD(+).

This sequence belongs to the NAD synthetase family. As to quaternary structure, homodimer.

It carries out the reaction deamido-NAD(+) + NH4(+) + ATP = AMP + diphosphate + NAD(+) + H(+). The protein operates within cofactor biosynthesis; NAD(+) biosynthesis; NAD(+) from deamido-NAD(+) (ammonia route): step 1/1. Catalyzes the ATP-dependent amidation of deamido-NAD to form NAD. Uses ammonia as a nitrogen source. The chain is NH(3)-dependent NAD(+) synthetase from Rhodococcus jostii (strain RHA1).